The chain runs to 635 residues: Threonine--tRNA ligase (635 aa).

Positions 1 to 61 constitute a TGS domain; it reads MVSIRLPDGS…DRDASLAIVT (61 aa). Residues 242-533 are catalytic; sequence DHRKLGKQLD…LIEHHAGAMP (292 aa). Residues Cys-333, His-384, and His-510 each contribute to the Zn(2+) site.

The protein belongs to the class-II aminoacyl-tRNA synthetase family. In terms of assembly, homodimer. Requires Zn(2+) as cofactor.

The protein resides in the cytoplasm. It carries out the reaction tRNA(Thr) + L-threonine + ATP = L-threonyl-tRNA(Thr) + AMP + diphosphate + H(+). Catalyzes the attachment of threonine to tRNA(Thr) in a two-step reaction: L-threonine is first activated by ATP to form Thr-AMP and then transferred to the acceptor end of tRNA(Thr). Also edits incorrectly charged L-seryl-tRNA(Thr). This is Threonine--tRNA ligase from Burkholderia cenocepacia (strain ATCC BAA-245 / DSM 16553 / LMG 16656 / NCTC 13227 / J2315 / CF5610) (Burkholderia cepacia (strain J2315)).